The primary structure comprises 121 residues: Small ribosomal subunit protein bS6m (121 aa).

The protein belongs to the bacterial ribosomal protein bS6 family. In terms of assembly, component of the mitochondrial ribosome small subunit (28S) which comprises a 12S rRNA and about 30 distinct proteins.

It is found in the mitochondrion. This chain is Small ribosomal subunit protein bS6m (MRPS6), found in Gallus gallus (Chicken).